The primary structure comprises 163 residues: Disulfide bond formation protein B (163 aa).

Residues 1-9 (MRLASPRSL) are Cytoplasmic-facing. A helical membrane pass occupies residues 10–26 (FVIAFLGSALLIAIALY). At 27-44 (MEHVMGLAPCPLCIVQRI) the chain is on the periplasmic side. The cysteines at positions 36 and 39 are disulfide-linked. A helical membrane pass occupies residues 45 to 61 (CVIGFGLVCLVAAIHGP). Residues 62–67 (AKVGRR) are Cytoplasmic-facing. A helical membrane pass occupies residues 68–85 (VYAAIAALFVAAGAATAI). Topologically, residues 86 to 142 (RQIWLQSVPADQLPSCLPSLEYMMEALPFQEIARLVLHGTAECAEVSWTMLGMSIPE) are periplasmic. Cysteines 101 and 128 form a disulfide. Residues 143-161 (WSLLGFIGMAIVCLWQLLR) traverse the membrane as a helical segment. Topologically, residues 162 to 163 (RD) are cytoplasmic.

The protein belongs to the DsbB family.

It localises to the cell inner membrane. Required for disulfide bond formation in some periplasmic proteins. Acts by oxidizing the DsbA protein. The chain is Disulfide bond formation protein B from Stutzerimonas stutzeri (strain A1501) (Pseudomonas stutzeri).